The chain runs to 381 residues: L-lactate dehydrogenase (381 aa).

The FMN hydroxy acid dehydrogenase domain occupies 1-380 (MIISASTDYR…TRDSLVRELG (380 aa)). Position 24 (Tyr24) interacts with substrate. 2 residues coordinate FMN: Ser106 and Gln127. Tyr129 contributes to the substrate binding site. FMN is bound at residue Thr155. Arg164 contributes to the substrate binding site. Residue Lys251 participates in FMN binding. His275 serves as the catalytic Proton acceptor. Arg278 lines the substrate pocket. 306 to 330 (DSGIRSGLDVVRMIALGADTVLIGR) contributes to the FMN binding site.

The protein belongs to the FMN-dependent alpha-hydroxy acid dehydrogenase family. In terms of assembly, homotetramer. The cofactor is FMN.

It localises to the cell inner membrane. The enzyme catalyses (S)-lactate + A = pyruvate + AH2. Its function is as follows. Catalyzes the conversion of L-lactate to pyruvate. Is coupled to the respiratory chain. This Pseudomonas entomophila (strain L48) protein is L-lactate dehydrogenase.